A 594-amino-acid polypeptide reads, in one-letter code: Protein REBELOTE (594 aa).

Residues M1–K13 show a composition bias toward basic residues. 2 disordered regions span residues M1–K21 and A35–R58. 3 consecutive short sequence motifs (nuclear localization signal) follow at residues A8–N15, A35–Q42, and L512–S519. Positions K36–R58 are enriched in basic and acidic residues.

It belongs to the NOC2 family. Interacts with SWA2, NOC2 and NOC3 in both the nucleolus and nucleoplasm. Binds to ENAP1 and OBE1. As to expression, expressed at low levels in roots, shoots, leaves, stems, inflorescences, flowers and siliques, with highest levels dividing tissues.

The protein resides in the nucleus. Its subcellular location is the nucleolus. It is found in the nucleoplasm. Functionally, collaboratively with CYP40/SQN and ULT1, influences floral meristem (FM) determinacy in an AGAMOUS and SUPERMAN-dependent manner, thus contributing to the floral developmental homeostasis. This Arabidopsis thaliana (Mouse-ear cress) protein is Protein REBELOTE.